Here is a 178-residue protein sequence, read N- to C-terminus: Putative adenylate kinase (178 aa).

The ATP site is built by Gly-10, Gly-12, Lys-13, Ser-14, and Ser-15. Residues 29-50 form an NMP region; sequence TVVELAEKHGCIIDEEDGEIVI. Residues 94–104 form an LID region; sequence GRNWSEEKLLE. Residue Arg-95 participates in ATP binding.

It belongs to the adenylate kinase family. AK6 subfamily. In terms of assembly, interacts with uS11. Not a structural component of 40S pre-ribosomes, but transiently interacts with them by binding to uS11.

It catalyses the reaction AMP + ATP = 2 ADP. It carries out the reaction ATP + H2O = ADP + phosphate + H(+). Broad-specificity nucleoside monophosphate (NMP) kinase that catalyzes the reversible transfer of the terminal phosphate group between nucleoside triphosphates and monophosphates. Also has ATPase activity. Involved in the late maturation steps of the 30S ribosomal particles, specifically 16S rRNA maturation. While NMP activity is not required for ribosome maturation, ATPase activity is. Associates transiently with small ribosomal subunit protein uS11. ATP hydrolysis breaks the interaction with uS11. May temporarily remove uS11 from the ribosome to enable a conformational change of the ribosomal RNA that is needed for the final maturation step of the small ribosomal subunit. The polypeptide is Putative adenylate kinase (Archaeoglobus fulgidus (strain ATCC 49558 / DSM 4304 / JCM 9628 / NBRC 100126 / VC-16)).